Here is a 124-residue protein sequence, read N- to C-terminus: MSRLSWKKEHKLLRKPEFDLCYEQGKKLFTKSFILFVLCHGSGPSGVRLGLTVSRKKGPAVVRNRIKRVLRSYFRINQEIFQVRADIIIVPKRALDGKTITYALAEKELLPMVGKINKLSCGGE.

The protein belongs to the RnpA family. In terms of assembly, consists of a catalytic RNA component (M1 or rnpB) and a protein subunit.

It carries out the reaction Endonucleolytic cleavage of RNA, removing 5'-extranucleotides from tRNA precursor.. Its function is as follows. RNaseP catalyzes the removal of the 5'-leader sequence from pre-tRNA to produce the mature 5'-terminus. It can also cleave other RNA substrates such as 4.5S RNA. The protein component plays an auxiliary but essential role in vivo by binding to the 5'-leader sequence and broadening the substrate specificity of the ribozyme. The chain is Ribonuclease P protein component from Maridesulfovibrio salexigens (strain ATCC 14822 / DSM 2638 / NCIMB 8403 / VKM B-1763) (Desulfovibrio salexigens).